The following is a 500-amino-acid chain: Cytochrome P450 71B9 (500 aa).

Residues 1–21 (MATIWFLSLLFLCCILLAAFK) form a helical membrane-spanning segment. Cys440 provides a ligand contact to heme.

This sequence belongs to the cytochrome P450 family. It depends on heme as a cofactor.

Its subcellular location is the membrane. This Arabidopsis thaliana (Mouse-ear cress) protein is Cytochrome P450 71B9 (CYP71B9).